A 707-amino-acid chain; its full sequence is U-box domain-containing protein 2 (707 aa).

A U-box domain is found at 239-313 (RVPSDFRCSL…ASWCETNNVY (75 aa)). ARM repeat units follow at residues 453-492 (TDNR…NLSI), 494-534 (DNNK…SLSV), 536-575 (EEYK…NLSI), 577-615 (HENK…NLAT), and 617-656 (REGK…QLCT).

The enzyme catalyses S-ubiquitinyl-[E2 ubiquitin-conjugating enzyme]-L-cysteine + [acceptor protein]-L-lysine = [E2 ubiquitin-conjugating enzyme]-L-cysteine + N(6)-ubiquitinyl-[acceptor protein]-L-lysine.. The protein operates within protein modification; protein ubiquitination. Functions as an E3 ubiquitin ligase. The protein is U-box domain-containing protein 2 (PUB2) of Arabidopsis thaliana (Mouse-ear cress).